A 366-amino-acid chain; its full sequence is Protein FAM131A (366 aa).

The tract at residues 342-366 is disordered; sequence QRQASDLASSGVVSLDEDEAEPEEQ. Over residues 356 to 366 the composition is skewed to acidic residues; the sequence is LDEDEAEPEEQ.

This sequence belongs to the FAM131 family.

The polypeptide is Protein FAM131A (FAM131A) (Homo sapiens (Human)).